The chain runs to 341 residues: Elongation factor Ts (341 aa).

An involved in Mg(2+) ion dislocation from EF-Tu region spans residues 80 to 83 (TDFV).

It belongs to the EF-Ts family.

The protein resides in the cytoplasm. In terms of biological role, associates with the EF-Tu.GDP complex and induces the exchange of GDP to GTP. It remains bound to the aminoacyl-tRNA.EF-Tu.GTP complex up to the GTP hydrolysis stage on the ribosome. This is Elongation factor Ts from Lactobacillus helveticus (strain DPC 4571).